The chain runs to 200 residues: Type 1 fimbriae regulatory protein FimB (200 aa).

Residues 8 to 189 (KKRNFLTHSE…NAGRFYGIWD (182 aa)) enclose the Tyr recombinase domain. Residues Arg-47, Lys-72, His-141, Arg-144, and His-167 contribute to the active site. Tyr-176 (O-(3'-phospho-DNA)-tyrosine intermediate) is an active-site residue.

The protein belongs to the 'phage' integrase family.

Its function is as follows. FimB is one of the 2 regulatory proteins which control the phase variation of type 1 fimbriae in E.coli. These proteins mediate the periodic inversion of a 300bp DNA segment that harbors the promoter for the fimbrial structural gene, fimA. FimB switches fimA on. This Escherichia coli O157:H7 protein is Type 1 fimbriae regulatory protein FimB (fimB).